The chain runs to 232 residues: Large ribosomal subunit protein uL1 (232 aa).

This sequence belongs to the universal ribosomal protein uL1 family. In terms of assembly, part of the 50S ribosomal subunit.

Binds directly to 23S rRNA. The L1 stalk is quite mobile in the ribosome, and is involved in E site tRNA release. Its function is as follows. Protein L1 is also a translational repressor protein, it controls the translation of the L11 operon by binding to its mRNA. In Bacillus pumilus (strain SAFR-032), this protein is Large ribosomal subunit protein uL1.